Reading from the N-terminus, the 146-residue chain is Hemoglobin subunit beta (146 aa).

Position 1 is an N-acetylvaline (V1). The 145-residue stretch at 2 to 146 folds into the Globin domain; that stretch reads HLTGEEKSAV…VANALAHKYH (145 aa). The residue at position 12 (T12) is a Phosphothreonine. S44 is subject to Phosphoserine. The residue at position 59 (K59) is an N6-acetyllysine. H63 contributes to the heme b binding site. K82 carries the post-translational modification N6-acetyllysine. H92 provides a ligand contact to heme b. At C93 the chain carries S-nitrosocysteine. K144 is modified (N6-acetyllysine).

It belongs to the globin family. In terms of assembly, heterotetramer of two alpha chains and two beta chains. Red blood cells.

Involved in oxygen transport from the lung to the various peripheral tissues. The polypeptide is Hemoglobin subunit beta (HBB) (Saguinus mystax (Moustached tamarin)).